The following is a 123-amino-acid chain: Large ribosomal subunit protein bL12 (123 aa).

It belongs to the bacterial ribosomal protein bL12 family. In terms of assembly, homodimer. Part of the ribosomal stalk of the 50S ribosomal subunit. Forms a multimeric L10(L12)X complex, where L10 forms an elongated spine to which 2 to 4 L12 dimers bind in a sequential fashion. Binds GTP-bound translation factors.

Its function is as follows. Forms part of the ribosomal stalk which helps the ribosome interact with GTP-bound translation factors. Is thus essential for accurate translation. The chain is Large ribosomal subunit protein bL12 from Shewanella sp. (strain MR-4).